A 157-amino-acid polypeptide reads, in one-letter code: UPF0262 protein Atu0536 (157 aa).

The protein belongs to the UPF0262 family.

This Agrobacterium fabrum (strain C58 / ATCC 33970) (Agrobacterium tumefaciens (strain C58)) protein is UPF0262 protein Atu0536.